Consider the following 499-residue polypeptide: Aspartyl/glutamyl-tRNA(Asn/Gln) amidotransferase subunit B (499 aa).

Belongs to the GatB/GatE family. GatB subfamily. Heterotrimer of A, B and C subunits.

The enzyme catalyses L-glutamyl-tRNA(Gln) + L-glutamine + ATP + H2O = L-glutaminyl-tRNA(Gln) + L-glutamate + ADP + phosphate + H(+). It carries out the reaction L-aspartyl-tRNA(Asn) + L-glutamine + ATP + H2O = L-asparaginyl-tRNA(Asn) + L-glutamate + ADP + phosphate + 2 H(+). Allows the formation of correctly charged Asn-tRNA(Asn) or Gln-tRNA(Gln) through the transamidation of misacylated Asp-tRNA(Asn) or Glu-tRNA(Gln) in organisms which lack either or both of asparaginyl-tRNA or glutaminyl-tRNA synthetases. The reaction takes place in the presence of glutamine and ATP through an activated phospho-Asp-tRNA(Asn) or phospho-Glu-tRNA(Gln). The polypeptide is Aspartyl/glutamyl-tRNA(Asn/Gln) amidotransferase subunit B (Salinispora arenicola (strain CNS-205)).